The sequence spans 330 residues: tRNA uridine(34) hydroxylase (330 aa).

A Rhodanese domain is found at 123 to 217 (SDPEVILVDT…YLEEVKQEES (95 aa)). The active-site Cysteine persulfide intermediate is the Cys-177.

It belongs to the TrhO family.

The catalysed reaction is uridine(34) in tRNA + AH2 + O2 = 5-hydroxyuridine(34) in tRNA + A + H2O. Functionally, catalyzes oxygen-dependent 5-hydroxyuridine (ho5U) modification at position 34 in tRNAs. This Shewanella sp. (strain ANA-3) protein is tRNA uridine(34) hydroxylase.